Here is a 206-residue protein sequence, read N- to C-terminus: Large ribosomal subunit protein uL4 (206 aa).

Residues 62–85 (KPWRQKGTGRARQGSTRSPQFRGG) are disordered.

Belongs to the universal ribosomal protein uL4 family. Part of the 50S ribosomal subunit.

Its function is as follows. One of the primary rRNA binding proteins, this protein initially binds near the 5'-end of the 23S rRNA. It is important during the early stages of 50S assembly. It makes multiple contacts with different domains of the 23S rRNA in the assembled 50S subunit and ribosome. Functionally, forms part of the polypeptide exit tunnel. In Rhodospirillum centenum (strain ATCC 51521 / SW), this protein is Large ribosomal subunit protein uL4.